Here is a 436-residue protein sequence, read N- to C-terminus: Proline transporter 3 (436 aa).

The next 11 membrane-spanning stretches (helical) occupy residues 29–49, 52–72, 118–138, 151–171, 172–192, 216–236, 254–274, 296–316, 345–365, 366–386, and 405–425; these read SWFQ…VLGY, TVMV…ATAI, LFMI…AVYV, FIAI…HLSA, LGIW…VAIV, LFTI…GMLP, LYFQ…IGYW, ALAN…FASP, GGYI…GDFM, SLTG…HMYY, and VVFF…LIAL.

It belongs to the amino acid/polyamine transporter 2 family. Amino acid/auxin permease (AAAP) (TC 2.A.18.3) subfamily. As to expression, expressed in epidermal cells of leaves, sepals and petals.

Its subcellular location is the cell membrane. In terms of biological role, proline transporter that mediates proline and glycine betaine transport. When expressed in a heterologous system (yeast), imports L-proline, glycine betaine and GABA across the plasma membrane. The protein is Proline transporter 3 (PROT3) of Arabidopsis thaliana (Mouse-ear cress).